A 297-amino-acid polypeptide reads, in one-letter code: Formamidopyrimidine-DNA glycosylase (297 aa).

Proline 2 serves as the catalytic Schiff-base intermediate with DNA. Glutamate 3 functions as the Proton donor in the catalytic mechanism. Lysine 58 functions as the Proton donor; for beta-elimination activity in the catalytic mechanism. 3 residues coordinate DNA: histidine 106, arginine 125, and arginine 168. Residues 259-295 (RVYDREGLACTARGCRGVVRRVVQSGRSTFFCEVCQP) form an FPG-type zinc finger. Arginine 285 serves as the catalytic Proton donor; for delta-elimination activity.

The protein belongs to the FPG family. Monomer. The cofactor is Zn(2+).

It carries out the reaction Hydrolysis of DNA containing ring-opened 7-methylguanine residues, releasing 2,6-diamino-4-hydroxy-5-(N-methyl)formamidopyrimidine.. It catalyses the reaction 2'-deoxyribonucleotide-(2'-deoxyribose 5'-phosphate)-2'-deoxyribonucleotide-DNA = a 3'-end 2'-deoxyribonucleotide-(2,3-dehydro-2,3-deoxyribose 5'-phosphate)-DNA + a 5'-end 5'-phospho-2'-deoxyribonucleoside-DNA + H(+). In terms of biological role, involved in base excision repair of DNA damaged by oxidation or by mutagenic agents. Acts as a DNA glycosylase that recognizes and removes damaged bases. Has a preference for oxidized purines, such as 7,8-dihydro-8-oxoguanine (8-oxoG). Has AP (apurinic/apyrimidinic) lyase activity and introduces nicks in the DNA strand. Cleaves the DNA backbone by beta-delta elimination to generate a single-strand break at the site of the removed base with both 3'- and 5'-phosphates. This Methylobacterium nodulans (strain LMG 21967 / CNCM I-2342 / ORS 2060) protein is Formamidopyrimidine-DNA glycosylase.